The primary structure comprises 345 residues: Platelet-derived growth factor C (345 aa).

The signal sequence occupies residues 1-22; that stretch reads MSLFGLLLLTSALAGQRQGTQA. 2 N-linked (GlcNAc...) asparagine glycosylation sites follow: Asn25 and Asn55. The region spanning 46-163 is the CUB domain; the sequence is HERIITVSTN…PGFCIHYNIV (118 aa). Intrachain disulfides connect Cys104/Cys124, Cys250/Cys294, Cys280/Cys335, and Cys287/Cys337.

This sequence belongs to the PDGF/VEGF growth factor family. In terms of assembly, homodimer; disulfide-linked. Interacts with PDGFRA homodimers, and with heterodimers formed by PDGFRA and PDGFRB. Interacts (via CUB domain) with PLAT (via kringle domain). Post-translationally, proteolytic removal of the N-terminal CUB domain releasing the core domain is necessary for unmasking the receptor-binding epitopes of the core domain. Cleavage after basic residues in the hinge region (region connecting the CUB and growth factor domains) gives rise to the receptor-binding form. Cleaved by PLAT and PLG. Sumoylated with SUMO1. In terms of processing, N-glycosylated. In terms of tissue distribution, expressed in the fallopian tube, vascular smooth muscle cells in kidney, breast and colon and in visceral smooth muscle of the gastrointestinal tract. Highly expressed in retinal pigment epithelia. Expressed in medulloblastoma. In the kidney, constitutively expressed in parietal epithelial cells of Bowman's capsule, tubular epithelial cells and in arterial endothelial cells (at protein level). Highly expressed in the platelets, prostate, testis and uterus. Higher expression is observed in uterine leiomyomata. Weaker expression in the spleen, thymus, heart, pancreas, liver, ovary cells and small intestine, and negligible expression in the colon and peripheral blood leukocytes.

It is found in the cytoplasm. Its subcellular location is the cytosol. The protein localises to the secreted. The protein resides in the nucleus. It localises to the cytoplasmic granule. It is found in the cell membrane. Growth factor that plays an essential role in the regulation of embryonic development, cell proliferation, cell migration, survival and chemotaxis. Potent mitogen and chemoattractant for cells of mesenchymal origin. Required for normal skeleton formation during embryonic development, especially for normal development of the craniofacial skeleton and for normal development of the palate. Required for normal skin morphogenesis during embryonic development. Plays an important role in wound healing, where it appears to be involved in three stages: inflammation, proliferation and remodeling. Plays an important role in angiogenesis and blood vessel development. Involved in fibrotic processes, in which transformation of interstitial fibroblasts into myofibroblasts plus collagen deposition occurs. The CUB domain has mitogenic activity in coronary artery smooth muscle cells, suggesting a role beyond the maintenance of the latency of the PDGF domain. In the nucleus, PDGFC seems to have additional function. The chain is Platelet-derived growth factor C (PDGFC) from Homo sapiens (Human).